The chain runs to 246 residues: C-X-C motif chemokine 16 (246 aa).

The signal sequence occupies residues 1 to 26; it reads MRRGFGPLSLAFFLFLLALLTLPGDG. Residues 27–201 lie on the Extracellular side of the membrane; that stretch reads NQGSVAGSCS…PGAGASTPAW (175 aa). 2 disulfide bridges follow: Cys-35–Cys-65 and Cys-37–Cys-79. Disordered regions lie at residues 104 to 150 and 175 to 198; these read GKSF…SGAL and PEAEANEKQQDDRQQEAPGAGAST. Over residues 128–146 the composition is skewed to polar residues; that stretch reads PSDTSTPAHSQSTQHSTLP. A compositionally biased stretch (basic and acidic residues) spans 175–189; the sequence is PEAEANEKQQDDRQQ. Residues 202–222 traverse the membrane as a helical segment; that stretch reads VPVLSLLAIVFFLTAAMAYVL. Over 223 to 246 the chain is Cytoplasmic; the sequence is CNRRATQQNSAGLQLWYTPVEPRP.

The protein belongs to the intercrine alpha (chemokine CxC) family. In terms of processing, glycosylated. As to expression, widely expressed. Not detected in purified B- and T-cells.

Its subcellular location is the membrane. Induces a strong chemotactic response. Induces calcium mobilization. Binds to CXCR6/Bonzo. Also acts as a scavenger receptor on macrophages, which specifically binds to OxLDL (oxidized low density lipoprotein), suggesting that it may be involved in pathophysiology such as atherogenesis. The sequence is that of C-X-C motif chemokine 16 (Cxcl16) from Mus musculus (Mouse).